Reading from the N-terminus, the 221-residue chain is Casparian strip membrane protein 3 (221 aa).

Residues 1–12 (MDIEKAGSRREE) show a composition bias toward basic and acidic residues. A disordered region spans residues 1 to 27 (MDIEKAGSRREEEEPIVQRPKLDKGKG). Residues 1–58 (MDIEKAGSRREEEEPIVQRPKLDKGKGKAHVFAPPMNYNRIMDKHKQEKMSPAGWKRG) lie on the Cytoplasmic side of the membrane. A helical transmembrane segment spans residues 59–79 (VAIFDFVLRLIAAITAMAAAA). Over 80-109 (KMATTEETLPFFTQFLQFQADYTDLPTMSS) the chain is Extracellular. The chain crosses the membrane as a helical span at residues 110 to 130 (FVIVNSIVGGYLTLSLPFSIV). At 131-148 (CILRPLAVPPRLFLILCD) the chain is on the cytoplasmic side. The helical transmembrane segment at 149 to 169 (TVMMGLTLMAASASAAIVYLA) threads the bilayer. Residues 170-194 (HNGNSSSNWLPVCQQFGDFCQGTSG) are Extracellular-facing. N-linked (GlcNAc...) asparagine glycosylation occurs at N173. Residues 195-215 (AVVASFIAATLLMFLVILSAF) form a helical membrane-spanning segment. Residues 216–221 (ALKRTT) lie on the Cytoplasmic side of the membrane.

Belongs to the Casparian strip membrane proteins (CASP) family. Homodimer and heterodimers with other CASP proteins. Interacts with CASP1, CASP2, CASP4 and CASP5.

Its subcellular location is the cell membrane. Functionally, regulates membrane-cell wall junctions and localized cell wall deposition. Required for establishment of the Casparian strip membrane domain (CSD) and the subsequent formation of Casparian strips, a cell wall modification of the root endodermis that determines an apoplastic barrier between the intraorganismal apoplasm and the extraorganismal apoplasm and prevents lateral diffusion. In Arabidopsis thaliana (Mouse-ear cress), this protein is Casparian strip membrane protein 3 (CASP3).